The following is a 217-amino-acid chain: Uracil-DNA glycosylase (217 aa).

The active-site Proton acceptor is aspartate 62.

This sequence belongs to the uracil-DNA glycosylase (UDG) superfamily. UNG family.

It is found in the cytoplasm. The catalysed reaction is Hydrolyzes single-stranded DNA or mismatched double-stranded DNA and polynucleotides, releasing free uracil.. Functionally, excises uracil residues from the DNA which can arise as a result of misincorporation of dUMP residues by DNA polymerase or due to deamination of cytosine. This Streptococcus pyogenes serotype M49 (strain NZ131) protein is Uracil-DNA glycosylase.